Reading from the N-terminus, the 405-residue chain is Mevalonate 3,5-bisphosphate decarboxylase (405 aa).

It belongs to the mevalonate 3,5-bisphosphate decarboxylase family. Homodimer.

The catalysed reaction is (R)-3,5-bisphosphomevalonate + H(+) = isopentenyl phosphate + phosphate + CO2. It participates in isoprenoid biosynthesis; isopentenyl diphosphate biosynthesis via mevalonate pathway. In terms of biological role, catalyzes the ATP-independent decarboxylation of (R)-mevalonate 3,5-bisphosphate to isopentenyl phosphate. Functions in an alternative mevalonate pathway, only present in extreme acidophiles of the Thermoplasmatales order, which passes through mevalonate 3-phosphate rather than mevalonate 5-phosphate. The sequence is that of Mevalonate 3,5-bisphosphate decarboxylase from Thermoplasma acidophilum (strain ATCC 25905 / DSM 1728 / JCM 9062 / NBRC 15155 / AMRC-C165).